A 28-amino-acid polypeptide reads, in one-letter code: Cycloviolin-B (28 aa).

Positions 1–28 form a cross-link, cyclopeptide (Gly-Asn); the sequence is GTACGESCYVLPCFTVGCTCTSSQCFKN. 3 disulfide bridges follow: Cys4/Cys18, Cys8/Cys20, and Cys13/Cys25.

This is a cyclic peptide.

Probably participates in a plant defense mechanism. Has anti-HIV activity. This is Cycloviolin-B from Leonia cymosa (Sacha uba).